The following is an 85-amino-acid chain: Putative membrane protein insertion efficiency factor (85 aa).

The protein belongs to the UPF0161 family.

It is found in the cell membrane. Functionally, could be involved in insertion of integral membrane proteins into the membrane. Its function is as follows. Lyses fish blood cells. This is Putative membrane protein insertion efficiency factor (hlyA) from Aeromonas hydrophila.